The chain runs to 727 residues: Phosphoribosylformylglycinamidine synthase subunit PurL (727 aa).

Residue His-47 is part of the active site. ATP is bound by residues Tyr-50 and Lys-82. Residue Glu-84 participates in Mg(2+) binding. Substrate is bound by residues 85-88 (SHNH) and Arg-107. His-86 functions as the Proton acceptor in the catalytic mechanism. Asp-108 contacts Mg(2+). Position 229 (Gln-229) interacts with substrate. Residue Asp-257 coordinates Mg(2+). 301-303 (ESQ) contacts substrate. Residues Asp-486 and Gly-523 each contribute to the ATP site. Asn-524 lines the Mg(2+) pocket. Ser-526 is a binding site for substrate.

This sequence belongs to the FGAMS family. Monomer. Part of the FGAM synthase complex composed of 1 PurL, 1 PurQ and 2 PurS subunits.

Its subcellular location is the cytoplasm. The catalysed reaction is N(2)-formyl-N(1)-(5-phospho-beta-D-ribosyl)glycinamide + L-glutamine + ATP + H2O = 2-formamido-N(1)-(5-O-phospho-beta-D-ribosyl)acetamidine + L-glutamate + ADP + phosphate + H(+). Its pathway is purine metabolism; IMP biosynthesis via de novo pathway; 5-amino-1-(5-phospho-D-ribosyl)imidazole from N(2)-formyl-N(1)-(5-phospho-D-ribosyl)glycinamide: step 1/2. Its function is as follows. Part of the phosphoribosylformylglycinamidine synthase complex involved in the purines biosynthetic pathway. Catalyzes the ATP-dependent conversion of formylglycinamide ribonucleotide (FGAR) and glutamine to yield formylglycinamidine ribonucleotide (FGAM) and glutamate. The FGAM synthase complex is composed of three subunits. PurQ produces an ammonia molecule by converting glutamine to glutamate. PurL transfers the ammonia molecule to FGAR to form FGAM in an ATP-dependent manner. PurS interacts with PurQ and PurL and is thought to assist in the transfer of the ammonia molecule from PurQ to PurL. This chain is Phosphoribosylformylglycinamidine synthase subunit PurL, found in Petrotoga mobilis (strain DSM 10674 / SJ95).